Reading from the N-terminus, the 157-residue chain is MIILGIDPALGSLGWAVVAKENAQLKYLASGIIRTNSKDAIHHRLAFINSTLEKVILEYQPNMAAIEETFVNTNSVTSLKLGYARGAIMSLIGRYNLDMREFKPNTVKKTVTGYGHAEKDQMLHMIKLLLSGTALITNSDEADAVAIAYTCLVTKNY.

Active-site residues include D7, E67, and D140. Residues D7, E67, and D140 each contribute to the Mg(2+) site.

The protein belongs to the RuvC family. As to quaternary structure, homodimer which binds Holliday junction (HJ) DNA. The HJ becomes 2-fold symmetrical on binding to RuvC with unstacked arms; it has a different conformation from HJ DNA in complex with RuvA. In the full resolvosome a probable DNA-RuvA(4)-RuvB(12)-RuvC(2) complex forms which resolves the HJ. Mg(2+) serves as cofactor.

It localises to the cytoplasm. It catalyses the reaction Endonucleolytic cleavage at a junction such as a reciprocal single-stranded crossover between two homologous DNA duplexes (Holliday junction).. The RuvA-RuvB-RuvC complex processes Holliday junction (HJ) DNA during genetic recombination and DNA repair. Endonuclease that resolves HJ intermediates. Cleaves cruciform DNA by making single-stranded nicks across the HJ at symmetrical positions within the homologous arms, yielding a 5'-phosphate and a 3'-hydroxyl group; requires a central core of homology in the junction. The consensus cleavage sequence is 5'-(A/T)TT(C/G)-3'. Cleavage occurs on the 3'-side of the TT dinucleotide at the point of strand exchange. HJ branch migration catalyzed by RuvA-RuvB allows RuvC to scan DNA until it finds its consensus sequence, where it cleaves and resolves the cruciform DNA. The chain is Crossover junction endodeoxyribonuclease RuvC from Rickettsia africae (strain ESF-5).